A 208-amino-acid chain; its full sequence is Uracil phosphoribosyltransferase (208 aa).

5-phospho-alpha-D-ribose 1-diphosphate is bound by residues Arg78, Arg103, and 130-138 (DPMLATGGS). Residues Ile193 and 198-200 (GDA) contribute to the uracil site. Asp199 contacts 5-phospho-alpha-D-ribose 1-diphosphate.

The protein belongs to the UPRTase family. The cofactor is Mg(2+).

It catalyses the reaction UMP + diphosphate = 5-phospho-alpha-D-ribose 1-diphosphate + uracil. The protein operates within pyrimidine metabolism; UMP biosynthesis via salvage pathway; UMP from uracil: step 1/1. Its activity is regulated as follows. Allosterically activated by GTP. Functionally, catalyzes the conversion of uracil and 5-phospho-alpha-D-ribose 1-diphosphate (PRPP) to UMP and diphosphate. The polypeptide is Uracil phosphoribosyltransferase (Colwellia psychrerythraea (strain 34H / ATCC BAA-681) (Vibrio psychroerythus)).